A 926-amino-acid polypeptide reads, in one-letter code: LPS-assembly protein LptD (926 aa).

Residues 1-22 (MALKSPAFRKKFPLLVTGSLLA) form the signal peptide. Residues 58-99 (VDLPPRPVHDTTSVSSNGTVTSQSTSSGEQVAGTQLVTEAKG) form a disordered region. Positions 68-85 (TTSVSSNGTVTSQSTSSG) are enriched in low complexity.

This sequence belongs to the LptD family. As to quaternary structure, component of the lipopolysaccharide transport and assembly complex. Interacts with LptE and LptA.

The protein resides in the cell outer membrane. Together with LptE, is involved in the assembly of lipopolysaccharide (LPS) at the surface of the outer membrane. This Pseudomonas savastanoi pv. phaseolicola (strain 1448A / Race 6) (Pseudomonas syringae pv. phaseolicola (strain 1448A / Race 6)) protein is LPS-assembly protein LptD.